A 292-amino-acid chain; its full sequence is Glutamyl-Q tRNA(Asp) synthetase (292 aa).

L-glutamate contacts are provided by residues 9–13 (RFAPS) and E45. Residues 12–22 (PSPSGPLHAGS) carry the 'HIGH' region motif. Residues C99, C101, Y121, and C125 each contribute to the Zn(2+) site. L-glutamate is bound by residues Y184 and R202. The short motif at 240–244 (KLSKQ) is the 'KMSKS' region element. K243 is a binding site for ATP.

Belongs to the class-I aminoacyl-tRNA synthetase family. GluQ subfamily. Zn(2+) serves as cofactor.

Its function is as follows. Catalyzes the tRNA-independent activation of glutamate in presence of ATP and the subsequent transfer of glutamate onto a tRNA(Asp). Glutamate is transferred on the 2-amino-5-(4,5-dihydroxy-2-cyclopenten-1-yl) moiety of the queuosine in the wobble position of the QUC anticodon. This chain is Glutamyl-Q tRNA(Asp) synthetase, found in Verminephrobacter eiseniae (strain EF01-2).